The following is a 273-amino-acid chain: Proteasome subunit beta type-10 (273 aa).

M1 carries the post-translational modification N-acetylmethionine. Residues 1 to 39 constitute a propeptide, removed in mature form; the sequence is MLKQAVEPTGGFSFENCQRNASLEHVLPGLRVPHARKTG. Residue T40 is the Nucleophile of the active site.

It belongs to the peptidase T1B family. As to quaternary structure, the 26S proteasome consists of a 20S proteasome core and two 19S regulatory subunits. The 20S proteasome core is composed of 28 subunits that are arranged in four stacked rings, resulting in a barrel-shaped structure. The two end rings are each formed by seven alpha subunits, and the two central rings are each formed by seven beta subunits. The catalytic chamber with the active sites is on the inside of the barrel. Component of the immunoproteasome, where it displaces the equivalent housekeeping subunit PSMB7. Component of the spermatoproteasome, a form of the proteasome specifically found in testis. Post-translationally, autocleaved. The resulting N-terminal Thr residue of the mature subunit is responsible for the nucleophile proteolytic activity. Detected in liver (at protein level).

It is found in the cytoplasm. The protein localises to the nucleus. The catalysed reaction is Cleavage of peptide bonds with very broad specificity.. The proteasome is a multicatalytic proteinase complex which is characterized by its ability to cleave peptides with Arg, Phe, Tyr, Leu, and Glu adjacent to the leaving group at neutral or slightly basic pH. The proteasome has an ATP-dependent proteolytic activity. This subunit is involved in antigen processing to generate class I binding peptides. Plays a role in determining the T-cell repertoire for an antiviral T-cell response. This Mus musculus (Mouse) protein is Proteasome subunit beta type-10 (Psmb10).